The chain runs to 246 residues: Type III pantothenate kinase (246 aa).

6-13 provides a ligand contact to ATP; it reads DVGNTHSV. 103–106 serves as a coordination point for substrate; that stretch reads GADR. Asp105 (proton acceptor) is an active-site residue. Asp125 is a K(+) binding site. Thr128 contributes to the ATP binding site. Thr179 serves as a coordination point for substrate.

It belongs to the type III pantothenate kinase family. As to quaternary structure, homodimer. NH4(+) is required as a cofactor. It depends on K(+) as a cofactor.

The protein localises to the cytoplasm. It carries out the reaction (R)-pantothenate + ATP = (R)-4'-phosphopantothenate + ADP + H(+). The protein operates within cofactor biosynthesis; coenzyme A biosynthesis; CoA from (R)-pantothenate: step 1/5. In terms of biological role, catalyzes the phosphorylation of pantothenate (Pan), the first step in CoA biosynthesis. This is Type III pantothenate kinase from Thermotoga sp. (strain RQ2).